We begin with the raw amino-acid sequence, 187 residues long: MRLVLLGPPGSGKGTQAAQMQETLQIPHISTGDLLRSEVVAGTPLGLQAKQVMAQGDLVSDAILLGMLESRLSHTDVVKGFILDGYPRNLSQAAALDGLLAKFGHPLNAVVQLEVPTDVLVERIAGRAQAEGREDDTPDAVRKRLQVYNDSTAPVIGFYQQRGILLRVDGVGRLDEVSQRIAVALGC.

ATP is bound at residue 10–15; the sequence is GSGKGT. The segment at 30-59 is NMP; sequence STGDLLRSEVVAGTPLGLQAKQVMAQGDLV. Residues T31, R36, 57 to 59, 85 to 88, and Q92 contribute to the AMP site; these read DLV and GYPR. The interval 126-136 is LID; it reads GRAQAEGREDD. R127 contacts ATP. 2 residues coordinate AMP: R133 and R144. G172 contributes to the ATP binding site.

This sequence belongs to the adenylate kinase family. In terms of assembly, monomer.

The protein resides in the cytoplasm. The enzyme catalyses AMP + ATP = 2 ADP. Its pathway is purine metabolism; AMP biosynthesis via salvage pathway; AMP from ADP: step 1/1. In terms of biological role, catalyzes the reversible transfer of the terminal phosphate group between ATP and AMP. Plays an important role in cellular energy homeostasis and in adenine nucleotide metabolism. This is Adenylate kinase from Xylella fastidiosa (strain M23).